We begin with the raw amino-acid sequence, 315 residues long: Ribosomal RNA small subunit methyltransferase H (315 aa).

S-adenosyl-L-methionine-binding positions include glycine 37–histidine 39, aspartate 57, phenylalanine 83, aspartate 105, and glutamine 112.

Belongs to the methyltransferase superfamily. RsmH family.

Its subcellular location is the cytoplasm. It carries out the reaction cytidine(1402) in 16S rRNA + S-adenosyl-L-methionine = N(4)-methylcytidine(1402) in 16S rRNA + S-adenosyl-L-homocysteine + H(+). Its function is as follows. Specifically methylates the N4 position of cytidine in position 1402 (C1402) of 16S rRNA. The protein is Ribosomal RNA small subunit methyltransferase H of Pseudomonas putida (strain ATCC 47054 / DSM 6125 / CFBP 8728 / NCIMB 11950 / KT2440).